The chain runs to 201 residues: 3-isopropylmalate dehydratase small subunit (201 aa).

It belongs to the LeuD family. LeuD type 1 subfamily. Heterodimer of LeuC and LeuD.

It carries out the reaction (2R,3S)-3-isopropylmalate = (2S)-2-isopropylmalate. It participates in amino-acid biosynthesis; L-leucine biosynthesis; L-leucine from 3-methyl-2-oxobutanoate: step 2/4. In terms of biological role, catalyzes the isomerization between 2-isopropylmalate and 3-isopropylmalate, via the formation of 2-isopropylmaleate. The polypeptide is 3-isopropylmalate dehydratase small subunit (Shigella flexneri serotype 5b (strain 8401)).